A 62-amino-acid polypeptide reads, in one-letter code: Protein YmcF (62 aa).

The protein belongs to the YmcF/YnqF peptide family.

This chain is Protein YmcF, found in Escherichia coli (strain K12).